The sequence spans 142 residues: DNA-directed RNA polymerases I and III subunit RPAC2 (142 aa).

The segment covering Met1–Ala11 has biased composition (basic and acidic residues). Positions Met1–Glu45 are disordered. Thr15 and Thr33 each carry phosphothreonine. The span at Glu24 to Pro42 shows a compositional bias: acidic residues. A Glycyl lysine isopeptide (Lys-Gly) (interchain with G-Cter in ubiquitin) cross-link involves residue Lys134.

Belongs to the archaeal Rpo11/eukaryotic RPB11/RPC19 RNA polymerase subunit family. In terms of assembly, component of the RNA polymerase I (Pol I) and RNA polymerase III (Pol III) complexes. Component of the RNA polymerase I (Pol I) complex consisting of 14 subunits: RPA135, RPA190, RPC40, RPA14, RPB5, RPO26, RPA43, RPB8, RPA12, RPB10, RPC19, RPC10, RPA49 and RPA34. The complex is composed of a horseshoe-shaped core containing ten subunits (RPA135, RPA190, RPB5, RPO26, RPB8, RPB10, RPC10, RPA12, RPC19 and RPC40) where RPA135 and RPA190 form the DNA-binding cleft. Outside of the core, RPA14 and RPA43 form the stalk that mediates interactions with transcription initiation factors and newly synthesized RNA. Component of the RNA polymerase III (Pol III) complex consisting of 17 subunits. Directly interacts with the RPC40 subunit.

It is found in the nucleus. It localises to the nucleolus. DNA-dependent RNA polymerases catalyze the transcription of DNA into RNA using the four ribonucleoside triphosphates as substrates. Common core component of RNA polymerases I and III which synthesize ribosomal RNA precursors and small RNAs, such as 5S rRNA and tRNAs, respectively. The chain is DNA-directed RNA polymerases I and III subunit RPAC2 (RPC19) from Saccharomyces cerevisiae (strain ATCC 204508 / S288c) (Baker's yeast).